The following is a 274-amino-acid chain: Probable endonuclease LCL3 (274 aa).

A helical transmembrane segment spans residues 15–32 (AVLSIILTGSTLTLIYTY). One can recognise a TNase-like domain in the interval 53-261 (HWLYGKVTSV…RSRKKGLWIQ (209 aa)). R151 is a catalytic residue. D156 lines the Ca(2+) pocket. Active-site residues include E159 and R199.

It belongs to the LCL3 family.

It is found in the mitochondrion. The protein resides in the membrane. The protein is Probable endonuclease LCL3 (LCL3) of Saccharomyces cerevisiae (strain Lalvin EC1118 / Prise de mousse) (Baker's yeast).